Consider the following 162-residue polypeptide: Shikimate kinase (162 aa).

Residue 10 to 15 (GAGKST) coordinates ATP. S14 serves as a coordination point for Mg(2+). Substrate is bound by residues D28, R52, and G73. R113 is a binding site for ATP. R129 lines the substrate pocket.

Belongs to the shikimate kinase family. As to quaternary structure, monomer. Mg(2+) is required as a cofactor.

It is found in the cytoplasm. The catalysed reaction is shikimate + ATP = 3-phosphoshikimate + ADP + H(+). The protein operates within metabolic intermediate biosynthesis; chorismate biosynthesis; chorismate from D-erythrose 4-phosphate and phosphoenolpyruvate: step 5/7. In terms of biological role, catalyzes the specific phosphorylation of the 3-hydroxyl group of shikimic acid using ATP as a cosubstrate. This Lactococcus lactis subsp. lactis (strain IL1403) (Streptococcus lactis) protein is Shikimate kinase.